Reading from the N-terminus, the 388-residue chain is 3beta-hydroxysteroid dehydrogenase dhs-16 (388 aa).

Residues 2 to 22 (LELIYILPLLCFVYFLFRRFV) form a helical membrane-spanning segment. Tyrosine 188 serves as the catalytic Proton acceptor. 2 helical membrane-spanning segments follow: residues 300–320 (AIFM…WILA) and 346–366 (IQWI…TIFF).

Belongs to the short-chain dehydrogenases/reductases (SDR) family. As to expression, strongly expressed in the hypodermis and posterior pharyngeal bulb and in a number of unidentified neurons of the head and tail.

Its subcellular location is the membrane. The catalysed reaction is lathosterol + NAD(+) = 5alpha-cholest-7-en-3-one + NADH + H(+). It functions in the pathway steroid hormone biosynthesis; dafachronic acid biosynthesis. 3beta-hydroxysteroid dehydrogenase that converts 3beta-hydroxysteroids to 3-ketosteroids, an essential step in the production of dafachronic acids from cholesterol. Catalyzes the dehydrogenation of lathosterol (5alpha-cholest-7-en-3beta-ol) to lathosterone (5alpha-cholest-7-en-3-one), a step required for maximal biosynthesis of Delta(7)-dafachronic acid. Dafachronic acids act as ligands and bind directly to the nuclear hormone receptor (NHR) daf-12, suppressing dauer formation and inducing reproductive growth, they can also regulate C.elegans lifespan. The sequence is that of 3beta-hydroxysteroid dehydrogenase dhs-16 (dhs-16) from Caenorhabditis elegans.